Reading from the N-terminus, the 793-residue chain is Coiled-coil domain-containing protein 175 (793 aa).

Coiled coils occupy residues 131–163 (EINT…NEAL), 205–377 (KRED…VLSE), 431–535 (KTVY…MLMK), 562–679 (LPQL…KYRE), and 716–745 (LVDN…QHVS).

The chain is Coiled-coil domain-containing protein 175 (CCDC175) from Homo sapiens (Human).